Consider the following 362-residue polypeptide: Chorismate synthase (362 aa).

Arg-47 contacts NADP(+). FMN-binding positions include 124 to 126, Gly-286, 301 to 305, and Arg-327; these read RSS and KPTAT.

Belongs to the chorismate synthase family. As to quaternary structure, homotetramer. It depends on FMNH2 as a cofactor.

The enzyme catalyses 5-O-(1-carboxyvinyl)-3-phosphoshikimate = chorismate + phosphate. The protein operates within metabolic intermediate biosynthesis; chorismate biosynthesis; chorismate from D-erythrose 4-phosphate and phosphoenolpyruvate: step 7/7. Functionally, catalyzes the anti-1,4-elimination of the C-3 phosphate and the C-6 proR hydrogen from 5-enolpyruvylshikimate-3-phosphate (EPSP) to yield chorismate, which is the branch point compound that serves as the starting substrate for the three terminal pathways of aromatic amino acid biosynthesis. This reaction introduces a second double bond into the aromatic ring system. The sequence is that of Chorismate synthase from Rippkaea orientalis (strain PCC 8801 / RF-1) (Cyanothece sp. (strain PCC 8801)).